The chain runs to 2637 residues: Nonribisomal peptide synthetase valB (2637 aa).

The tract at residues 1 to 376 is condensation 1; it reads MADGADYTQR…KALIRSPPST (376 aa). The adenylation 1 stretch occupies residues 413–803; the sequence is SQASRRPDAA…VGRRDNQIKL (391 aa). A Carrier 1 domain is found at 946–1022; it reads PPANPPERAL…EAASEIKEPT (77 aa). The residue at position 983 (S983) is an O-(pantetheine 4'-phosphoryl)serine. Residues 1016-1045 form a disordered region; the sequence is SEIKEPTDASAPSPSPISRDLPLQKSNHDR. Positions 1063-1506 are condensation 2; the sequence is VEAIYPCTAL…LSRADMSLLQ (444 aa). The segment at 1524–1933 is adenylation 2; the sequence is AREVAHQRPL…EGRKDTRVKL (410 aa). In terms of domain architecture, Carrier 2 spans 2078–2154; sequence KEVTDDQAFM…YMVSKTSVSN (77 aa). Position 2115 is an O-(pantetheine 4'-phosphoryl)serine (S2115). The segment at 2193–2582 is condensation 3; sequence ESVAPATDAQ…LWMGAYLDAA (390 aa).

Belongs to the NRP synthetase family.

It participates in secondary metabolite biosynthesis. Nonribisomal peptide synthetase; part of the gene cluster that mediates the biosynthesis of valactamides. The first step of the pathway is performed by the highly reducing polyketide synthase valA that produces the polyketide part of the final products. An acetyl starter unit is incorporated by the ketosynthase domain of valA, and subsequently 6 malonyl-CoA-derived ketide units are incorporated and fully reduced to their respective alkane forms by the action of the ketoreductase, dehydratase, and enoylreductase domains (except for the penultimate unit, which is reduced only to the alkene). The final five ketide units are each proposed to be alpha-methylated by the methyltransferase domain before ketone reduction by the ketoreductase domain. The C1 domain of the nonribisomal peptide synthetase valB then catalyzes amide bond formation between the heptaketide chain and L-valine (L-Val) attached to the T1 domain. The C2 domain incorporating L-isoleucine (L-Ile) then carries out chain elongation, which is followed by macrolactonization by the Ct domain to release the final product. The polypeptide is Nonribisomal peptide synthetase valB (Aspergillus terreus).